We begin with the raw amino-acid sequence, 62 residues long: Translational regulator CsrA (62 aa).

Belongs to the CsrA/RsmA family. As to quaternary structure, homodimer; the beta-strands of each monomer intercalate to form a hydrophobic core, while the alpha-helices form wings that extend away from the core.

It is found in the cytoplasm. Functionally, a key translational regulator that binds mRNA to regulate translation initiation and/or mRNA stability. Mediates global changes in gene expression, shifting from rapid growth to stress survival by linking envelope stress, the stringent response and the catabolite repression systems. Usually binds in the 5'-UTR; binding at or near the Shine-Dalgarno sequence prevents ribosome-binding, repressing translation, binding elsewhere in the 5'-UTR can activate translation and/or stabilize the mRNA. Its function is antagonized by small RNA(s). The sequence is that of Translational regulator CsrA from Idiomarina loihiensis (strain ATCC BAA-735 / DSM 15497 / L2-TR).